The chain runs to 336 residues: Nucleoid-associated protein ECA2747 (336 aa).

Residues 317–336 (KGTPPNLRDQLQRRTSGGKQ) are disordered.

Belongs to the YejK family.

The protein resides in the cytoplasm. It is found in the nucleoid. The sequence is that of Nucleoid-associated protein ECA2747 from Pectobacterium atrosepticum (strain SCRI 1043 / ATCC BAA-672) (Erwinia carotovora subsp. atroseptica).